Consider the following 229-residue polypeptide: Potassium/proton antiporter CemA (229 aa).

4 consecutive transmembrane segments (helical) span residues 7 to 27 (FTPL…SLSF), 114 to 134 (IICF…LVIL), 154 to 174 (ILLV…ELMI), and 189 to 209 (IISG…KYWI).

This sequence belongs to the CemA family.

The protein localises to the plastid. It localises to the chloroplast inner membrane. It catalyses the reaction K(+)(in) + H(+)(out) = K(+)(out) + H(+)(in). Its function is as follows. Contributes to K(+)/H(+) antiport activity by supporting proton efflux to control proton extrusion and homeostasis in chloroplasts in a light-dependent manner to modulate photosynthesis. Prevents excessive induction of non-photochemical quenching (NPQ) under continuous-light conditions. Indirectly promotes efficient inorganic carbon uptake into chloroplasts. The chain is Potassium/proton antiporter CemA from Acorus calamus var. americanus (American sweet flag).